A 400-amino-acid chain; its full sequence is NADH dehydrogenase-like protein MT1860 (400 aa).

The protein belongs to the NADH dehydrogenase family. The cofactor is FAD.

This Mycobacterium tuberculosis (strain CDC 1551 / Oshkosh) protein is NADH dehydrogenase-like protein MT1860.